Reading from the N-terminus, the 532-residue chain is 56 kDa type-specific antigen (532 aa).

The signal sequence occupies residues 1-22; the sequence is MKKIMLIASAMSALSLPFSASA. The helical transmembrane segment at 67–87 threads the bilayer; that stretch reads LTTGLPFGGTLAAGMTIAPGF. 2 disordered regions span residues 113 to 140 and 400 to 426; these read KGEI…PQPT and QQEE…SKEG. Over residues 403 to 413 the composition is skewed to basic and acidic residues; the sequence is EDAKNQGKGDC. Residues 480–500 form a helical membrane-spanning segment; it reads TGMVASGALGVAINAAEGVCV.

The protein localises to the cell membrane. Its function is as follows. May be an adherent factor for rickettsial adsorption to the host-cell surface and a determinant of virulence of individual rickettsial strain. It is the major outer membrane protein. The polypeptide is 56 kDa type-specific antigen (Orientia tsutsugamushi (Rickettsia tsutsugamushi)).